Here is a 230-residue protein sequence, read N- to C-terminus: Cytidylate kinase (230 aa).

12-20 (GPSGAGKGT) is an ATP binding site.

The protein belongs to the cytidylate kinase family. Type 1 subfamily.

The protein localises to the cytoplasm. It catalyses the reaction CMP + ATP = CDP + ADP. It carries out the reaction dCMP + ATP = dCDP + ADP. In Shewanella sediminis (strain HAW-EB3), this protein is Cytidylate kinase.